The sequence spans 842 residues: Circularly permutated Ras protein 1 (842 aa).

GTP is bound by residues 62–66 (DTAGQ), 121–124 (NKVD), and 181–188 (GGGGVGKS). The tract at residues 253–274 (SGKDKQPSPQQAASPSTIDRTG) is disordered. Residues 259-274 (PSPQQAASPSTIDRTG) show a composition bias toward polar residues. Residues 377-627 (IIIYCIDVSG…TQNPMIATDV (251 aa)) form the VWFA domain.

The protein belongs to the small GTPase superfamily. CpRas family.

The sequence is that of Circularly permutated Ras protein 1 (cpras1) from Dictyostelium discoideum (Social amoeba).